We begin with the raw amino-acid sequence, 114 residues long: Small ribosomal subunit protein eS25 (114 aa).

The disordered stretch occupies residues methionine 1 to lysine 33. The segment covering glycine 20 to glycine 30 has biased composition (basic residues).

The protein belongs to the eukaryotic ribosomal protein eS25 family.

The chain is Small ribosomal subunit protein eS25 (RPS25) from Amaranthus cruentus (Purple amaranth).